An 803-amino-acid chain; its full sequence is Xylosyltransferase sqv-6 (803 aa).

The Cytoplasmic segment spans residues 3–13 (VVGGVNTNYRH). A helical; Signal-anchor for type II membrane protein membrane pass occupies residues 14–34 (YALVIVLFFFLNVYLLYSAQN). The Lumenal segment spans residues 35-803 (SVQIRKDEGE…GWDEEARILR (769 aa)). The cysteines at positions 63 and 91 are disulfide-linked. N-linked (GlcNAc...) asparagine glycosylation is found at N95, N175, and N224. Intrachain disulfides connect C107-C446, C465-C479, and C467-C477. The WSC domain maps to 115 to 209 (IDQRIGCFLD…FNAVEIFRTD (95 aa)). UDP-alpha-D-xylose-binding positions include D265 and 294-296 (TIW). N326 is a glycosylation site (N-linked (GlcNAc...) asparagine). 399-400 (DW) lines the UDP-alpha-D-xylose pocket. Residues S480 and 506 to 507 (RK) contribute to the UDP-alpha-D-xylose site. N-linked (GlcNAc...) asparagine glycosylation is found at N615 and N718. An intrachain disulfide couples C769 to C775.

The protein belongs to the glycosyltransferase 14 family. XylT subfamily. Requires a divalent metal cation as cofactor.

The protein resides in the endoplasmic reticulum membrane. The protein localises to the golgi apparatus membrane. The catalysed reaction is UDP-alpha-D-xylose + L-seryl-[protein] = 3-O-(beta-D-xylosyl)-L-seryl-[protein] + UDP + H(+). It participates in glycan metabolism; chondroitin sulfate biosynthesis. Its pathway is glycan metabolism; heparan sulfate biosynthesis. Catalyzes the first step in biosynthesis of glycosaminoglycan. Transfers D-xylose from UDP-D-xylose to specific serine residues of the core protein. This Caenorhabditis briggsae protein is Xylosyltransferase sqv-6.